We begin with the raw amino-acid sequence, 205 residues long: Octanoyltransferase (205 aa).

The region spanning 29–204 (AETPDEIWIV…HLLQQLDQKN (176 aa)) is the BPL/LPL catalytic domain. Substrate contacts are provided by residues 68-75 (RGGQVTYH), 135-137 (ALG), and 148-150 (GVS). The active-site Acyl-thioester intermediate is Cys166.

Belongs to the LipB family.

The protein resides in the cytoplasm. The enzyme catalyses octanoyl-[ACP] + L-lysyl-[protein] = N(6)-octanoyl-L-lysyl-[protein] + holo-[ACP] + H(+). It functions in the pathway protein modification; protein lipoylation via endogenous pathway; protein N(6)-(lipoyl)lysine from octanoyl-[acyl-carrier-protein]: step 1/2. Its function is as follows. Catalyzes the transfer of endogenously produced octanoic acid from octanoyl-acyl-carrier-protein onto the lipoyl domains of lipoate-dependent enzymes. Lipoyl-ACP can also act as a substrate although octanoyl-ACP is likely to be the physiological substrate. In Dechloromonas aromatica (strain RCB), this protein is Octanoyltransferase.